The chain runs to 259 residues: UPF0246 protein NGO_0461 (259 aa).

Belongs to the UPF0246 family.

This is UPF0246 protein NGO_0461 from Neisseria gonorrhoeae (strain ATCC 700825 / FA 1090).